The chain runs to 448 residues: Iroquois-class homeodomain protein irx-3 (448 aa).

Positions aspartate 108–asparagine 170 form a DNA-binding region, homeobox; TALE-type. 2 disordered regions span residues lysine 171–glutamate 250 and serine 387–serine 410. The segment covering lysine 195–aspartate 222 has biased composition (acidic residues). Basic and acidic residues predominate over residues threonine 223–serine 237. A compositionally biased stretch (acidic residues) spans glutamate 238–alanine 248. The segment covering alanine 396 to threonine 406 has biased composition (basic and acidic residues).

This sequence belongs to the TALE/IRO homeobox family. As to expression, expressed in the neural plate in overlapping patterns with other irx members, which all share an anterior border of expression. Outside the nervous system and at tailbud stages, expressed in the developing otic vesicle, branchial arches, prospective heart region and pronephros.

It is found in the nucleus. Functionally, acts partially redundantly with other irx members in neural patterning. Required for formation of the posterior forebrain, midbrain, hindbrain, and to a lesser extent, spinal cord. Both up-regulates and down-regulates gene expression during neural development. Acts early in neural plate development to induce proneural gene expression and specify a neural precursor state. Also up-regulates repressors that prevent neuronal differentiation. Required during at least two stages of pronephros kidney development; during neurula stages, maintains transcription of key renal genes to define the size and identity of the pronephric anlage, probably in part through regulation of bmp-signaling. Subsequently required for proper formation of the intermediate tubule segment of the pronephros. The protein is Iroquois-class homeodomain protein irx-3 of Xenopus tropicalis (Western clawed frog).